The primary structure comprises 302 residues: Stanniocalcin-2 (302 aa).

An N-terminal signal peptide occupies residues 1–24 (MCAERLGHFMTLALVLATIDPARG). The interval 23 to 44 (RGTDATNPPEGPQDRSSQQKGR) is disordered. An N-linked (GlcNAc...) asparagine glycan is attached at Asn73. The segment at 218-302 (PPTAPPERQP…EQSEYSDIRR (85 aa)) is disordered. Over residues 227 to 264 (PQVDRAKLSRAHHGEAGHHLPEPSSRETGRGAKGERGS) the composition is skewed to basic and acidic residues. A phosphoserine mark is found at Ser250 and Ser251. Thr254 carries the post-translational modification Phosphothreonine.

The protein belongs to the stanniocalcin family. As to quaternary structure, homodimer; disulfide-linked.

The protein resides in the secreted. In terms of biological role, has an anti-hypocalcemic action on calcium and phosphate homeostasis. The protein is Stanniocalcin-2 (STC2) of Macaca nemestrina (Pig-tailed macaque).